A 319-amino-acid chain; its full sequence is Beta-ketoacyl-[acyl-carrier-protein] synthase III (319 aa).

Residues C113 and H246 contribute to the active site. The segment at 247–251 (QANRR) is ACP-binding. Residue N276 is part of the active site.

Belongs to the thiolase-like superfamily. FabH family. In terms of assembly, homodimer.

It is found in the cytoplasm. The enzyme catalyses malonyl-[ACP] + acetyl-CoA + H(+) = 3-oxobutanoyl-[ACP] + CO2 + CoA. Its pathway is lipid metabolism; fatty acid biosynthesis. Functionally, catalyzes the condensation reaction of fatty acid synthesis by the addition to an acyl acceptor of two carbons from malonyl-ACP. Catalyzes the first condensation reaction which initiates fatty acid synthesis and may therefore play a role in governing the total rate of fatty acid production. Possesses both acetoacetyl-ACP synthase and acetyl transacylase activities. Its substrate specificity determines the biosynthesis of branched-chain and/or straight-chain of fatty acids. The sequence is that of Beta-ketoacyl-[acyl-carrier-protein] synthase III from Rhizorhabdus wittichii (strain DSM 6014 / CCUG 31198 / JCM 15750 / NBRC 105917 / EY 4224 / RW1) (Sphingomonas wittichii).